Here is a 597-residue protein sequence, read N- to C-terminus: Indole-3-acetic acid-amido synthetase GH3.4 (597 aa).

It belongs to the IAA-amido conjugating enzyme family.

Its function is as follows. Catalyzes the synthesis of indole-3-acetic acid (IAA)-amino acid conjugates, providing a mechanism for the plant to cope with the presence of excess auxin. Strongly reactive with Glu, Gln, Trp, Asp, Ala, Leu, Phe, Gly, Tyr, Met, Ile and Val. Little or no product formation with His, Ser, Thr, Arg, Lys, or Cys. Also active on pyruvic and butyric acid analogs of IAA, PAA and the synthetic auxin naphthaleneacetic acid (NAA). The two chlorinated synthetic auxin herbicides 2,4-D and 3,6-dichloro-o-anisic acid (dicamba) cannot be used as substrates. The chain is Indole-3-acetic acid-amido synthetase GH3.4 (GH3.4) from Arabidopsis thaliana (Mouse-ear cress).